The following is a 284-amino-acid chain: MLIIETLPMLRREVRRWRQDGKRVALVPTMGNLHDGHMTLVDEARERADIVIVSIFVNPMQFERADDLARYPRTLQEDCEKLNRRGVDLVFSPAPADIYPHGVDGQTFVDVPSLSTLLEGASRPGHFRGVSTIVSKLFNLVQPDLACFGEKDYQQLALIRKMVADMGYDIDIIGVPTVRAKDGLALSSRNGYLTAEERKIAPLLSKVMQQIAERLGQGERHVEEMMISAENTLAENGLRADGLAIVDADTLLPLNVDSQRAVILMAAWLGKARLIDNQQVDLTQ.

30 to 37 (MGNLHDGH) lines the ATP pocket. The active-site Proton donor is the His37. A (R)-pantoate-binding site is contributed by Gln61. Residue Gln61 participates in beta-alanine binding. ATP is bound at residue 149–152 (GEKD). A (R)-pantoate-binding site is contributed by Gln155. ATP contacts are provided by residues Val178 and 186-189 (LSSR).

The protein belongs to the pantothenate synthetase family. In terms of assembly, homodimer.

Its subcellular location is the cytoplasm. It carries out the reaction (R)-pantoate + beta-alanine + ATP = (R)-pantothenate + AMP + diphosphate + H(+). It functions in the pathway cofactor biosynthesis; (R)-pantothenate biosynthesis; (R)-pantothenate from (R)-pantoate and beta-alanine: step 1/1. Functionally, catalyzes the condensation of pantoate with beta-alanine in an ATP-dependent reaction via a pantoyl-adenylate intermediate. The chain is Pantothenate synthetase from Erwinia tasmaniensis (strain DSM 17950 / CFBP 7177 / CIP 109463 / NCPPB 4357 / Et1/99).